The sequence spans 465 residues: UDP-N-acetylmuramate--L-alanine ligase (465 aa).

112–118 provides a ligand contact to ATP; it reads GTHGKTT.

The protein belongs to the MurCDEF family.

The protein resides in the cytoplasm. It catalyses the reaction UDP-N-acetyl-alpha-D-muramate + L-alanine + ATP = UDP-N-acetyl-alpha-D-muramoyl-L-alanine + ADP + phosphate + H(+). The protein operates within cell wall biogenesis; peptidoglycan biosynthesis. In terms of biological role, cell wall formation. The chain is UDP-N-acetylmuramate--L-alanine ligase from Burkholderia vietnamiensis (strain G4 / LMG 22486) (Burkholderia cepacia (strain R1808)).